A 216-amino-acid polypeptide reads, in one-letter code: Probable transaldolase (216 aa).

The active-site Schiff-base intermediate with substrate is the lysine 84.

The protein belongs to the transaldolase family. Type 3B subfamily.

The protein localises to the cytoplasm. The enzyme catalyses D-sedoheptulose 7-phosphate + D-glyceraldehyde 3-phosphate = D-erythrose 4-phosphate + beta-D-fructose 6-phosphate. It functions in the pathway carbohydrate degradation; pentose phosphate pathway; D-glyceraldehyde 3-phosphate and beta-D-fructose 6-phosphate from D-ribose 5-phosphate and D-xylulose 5-phosphate (non-oxidative stage): step 2/3. Transaldolase is important for the balance of metabolites in the pentose-phosphate pathway. In Lysinibacillus sphaericus (strain C3-41), this protein is Probable transaldolase.